Here is a 300-residue protein sequence, read N- to C-terminus: Probable low-salt glycan biosynthesis reductase Agl14 (300 aa).

Residues Gly-10–Leu-12, Asp-46–Ile-47, and Ala-70–Thr-72 each bind NADH. Residues Leu-11–Leu-12, Asp-46–Ile-47, Ala-70–Thr-72, Tyr-109, Tyr-135, and Lys-139 contribute to the NADPH site. Positions 135 and 139 each coordinate NADH. Residue Tyr-135 is the Proton donor/acceptor of the active site.

Belongs to the dTDP-4-dehydrorhamnose reductase family.

It participates in protein modification; protein glycosylation. Its pathway is cell surface structure biogenesis; S-layer biogenesis. In terms of biological role, reductase involved in N-glycan biosynthetic pathway that takes place under low-salt conditions (1.75 M instead of 3.4 M). Participates in the formation of the tetrasaccharide present at 'Asn-532' of S-layer glycoprotein Csg, consisting of a sulfated hexose, 2 hexoses and rhamnose. Involved in the addition of final rhamnose (sugar 4) of the tetrasaccharide on the dolichol phosphate carrier. In Haloferax volcanii (strain ATCC 29605 / DSM 3757 / JCM 8879 / NBRC 14742 / NCIMB 2012 / VKM B-1768 / DS2) (Halobacterium volcanii), this protein is Probable low-salt glycan biosynthesis reductase Agl14 (agl14).